Here is a 126-residue protein sequence, read N- to C-terminus: Cornifin alpha (126 aa).

Ser2 is subject to N-acetylserine. A run of 13 repeats spans residues 3–14 (SQQQKQPCTLPP), 18–29 (QHQVKQPCQPPP), 31–38 (EPCVPKTK), 39–46 (EPCQPKVP), 47–54 (EPCQPKVP), 55–62 (EPCQPKVP), 63–70 (EPCQPKVP), 71–78 (QPCQPKVP), 79–86 (EPCQPKVP), 87–94 (EPCQPKVP), 95–102 (EPCQPKVP), 103–110 (EPCQSKVP), and 111–118 (QPCQPKVP). Residues 3 to 29 (SQQQKQPCTLPPQLQQHQVKQPCQPPP) form a 2 X 12 AA approximate repeats region. Residues 20-43 (QVKQPCQPPPQEPCVPKTKEPCQP) form a disordered region. Residues 31–122 (EPCVPKTKEP…CQPKVPEPCQ (92 aa)) are 11 X 8 AA approximate tandem repeats. Residues 104 to 126 (PCQSKVPQPCQPKVPEPCQTKQK) form a disordered region.

The protein belongs to the cornifin (SPRR) family. In terms of tissue distribution, suprabasal layers of squamous-differentiated tissues such as epidermis, esophagus, tongue and trachea.

It is found in the cytoplasm. In terms of biological role, cross-linked envelope protein of keratinocytes. It is a keratinocyte protein that first appears in the cell cytosol, but ultimately becomes cross-linked to membrane proteins by transglutaminase. All that results in the formation of an insoluble envelope beneath the plasma membrane. This is Cornifin alpha from Oryctolagus cuniculus (Rabbit).